A 223-amino-acid polypeptide reads, in one-letter code: Killer cell lectin-like receptor subfamily B member 1B allele A (223 aa).

The Cytoplasmic segment spans residues 1-43; the sequence is MDSTTLVYADLNLARIQEPKHDSPPSLSPDTCRCPRWHRLALK. The ITIM motif motif lies at 6–11; that stretch reads LVYADL. Residues 32–35 carry the LCK-binding motif motif; it reads CRCP. Residues 44–63 traverse the membrane as a helical; Signal-anchor for type II membrane protein segment; it reads FGCAGLILLVLVVIGLCVLV. At 64 to 223 the chain is on the extracellular side; that stretch reads LSVQKSSVQK…LNHETPSNDS (160 aa). The region spanning 93-212 is the C-type lectin domain; sequence ECPQDWLSHR…STDNRWICQK (120 aa). 2 disulfides stabilise this stretch: Cys122/Cys210 and Cys189/Cys202.

As to quaternary structure, homodimer; disulfide-linked. Interacts with tyrosine kinase LCK. Binds PTPN6/SHP-1 in a phosphorylation-dependent manner. In terms of tissue distribution, expressed in NK cells and a subset of T-cells.

The protein localises to the membrane. In terms of biological role, receptor for CLEC2D/OCIL. Ligand-binding contributes to inhibition of cytotoxic natural killer (NK) cells. May mediate MHC class I-independent 'missing-self' recognition of allografts, tumor cells and virus-infected cells. The chain is Killer cell lectin-like receptor subfamily B member 1B allele A (Klrb1b) from Mus musculus (Mouse).